The following is a 454-amino-acid chain: Allantoinase (454 aa).

Residues H60, H62, K147, H183, H239, and D312 each contribute to the Zn(2+) site. K147 carries the N6-carboxylysine modification.

This sequence belongs to the metallo-dependent hydrolases superfamily. Allantoinase family. As to quaternary structure, homotetramer. It depends on Zn(2+) as a cofactor. In terms of processing, carboxylation allows a single lysine to coordinate two zinc ions.

It carries out the reaction (S)-allantoin + H2O = allantoate + H(+). It participates in nitrogen metabolism; (S)-allantoin degradation; allantoate from (S)-allantoin: step 1/1. Its function is as follows. Catalyzes the conversion of allantoin (5-ureidohydantoin) to allantoic acid by hydrolytic cleavage of the five-member hydantoin ring. This is Allantoinase from Bacillus velezensis (strain DSM 23117 / BGSC 10A6 / LMG 26770 / FZB42) (Bacillus amyloliquefaciens subsp. plantarum).